Here is a 354-residue protein sequence, read N- to C-terminus: MSKVKSITRESWILSTFPEWGSWLNEEIEQEQVAPGTFAMWWLGCTGIWLKSEGGANVCVDFWCGTGKQSHGNPLMKQGHQMQRMAGVKKLQPNLRTTPFVLDPFAIRQIDAVLATHDHNDHIDVNVAAAVMQNCADDVPFIGPKTCVDLWIGWGVPKERCIVVKPGDVVKVKDIEIHALDAFDRTALITLPADQKAAGVLPDGMDDRAVNYLFKTPGGTLYHSGDSHYSNYYAKHGNEHQIDVALGSYGENPRGITDKMTSADILRMGEALNAKVVIPFHHDIWSNFQADPQEIRVLWEMKKDRLKYGFKPFIWQVGGKFTWPLDKDNFEYHYPRGFDDCFTIEPDLPFKSFL.

The protein belongs to the UlaG family. Requires a divalent metal cation as cofactor.

Its subcellular location is the cytoplasm. It carries out the reaction L-ascorbate 6-phosphate + H2O = 3-dehydro-L-gulonate 6-phosphate. The protein operates within cofactor degradation; L-ascorbate degradation; D-xylulose 5-phosphate from L-ascorbate: step 1/4. Its function is as follows. Probably catalyzes the hydrolysis of L-ascorbate-6-P into 3-keto-L-gulonate-6-P. Is essential for L-ascorbate utilization under anaerobic conditions. The sequence is that of Probable L-ascorbate-6-phosphate lactonase UlaG from Escherichia coli O45:K1 (strain S88 / ExPEC).